Consider the following 843-residue polypeptide: Protein P (843 aa).

The terminal protein domain (TP) stretch occupies residues 1–177 (MPLSYQHFRK…FCGSPYSWEQ (177 aa)). The interval 178–346 (DLQHGRLVFQ…YCLSHIVNLI (169 aa)) is spacer. The interval 219–269 (RKSRLGPQPAQGQLAGRQQGGSGSIRARVHPSPWGTVGVEPSGSGPTHNCA) is disordered. Residues 223-235 (LGPQPAQGQLAGR) show a composition bias toward low complexity. The segment at 347 to 690 (EDWGPCTEHG…YLNLYPVARQ (344 aa)) is polymerase/reverse transcriptase domain (RT). In terms of domain architecture, Reverse transcriptase spans 357–600 (EHRIRTPRTP…YSLNFMGYVI (244 aa)). Asp-429, Asp-551, and Asp-552 together coordinate Mg(2+).

It belongs to the hepadnaviridae P protein family.

It carries out the reaction DNA(n) + a 2'-deoxyribonucleoside 5'-triphosphate = DNA(n+1) + diphosphate. The catalysed reaction is Endonucleolytic cleavage to 5'-phosphomonoester.. Its activity is regulated as follows. Activated by host HSP70 and HSP40 in vitro to be able to bind the epsilon loop of the pgRNA. Because deletion of the RNase H region renders the protein partly chaperone-independent, the chaperones may be needed indirectly to relieve occlusion of the RNA-binding site by this domain. Inhibited by several reverse-transcriptase inhibitors: Lamivudine, Adefovir and Entecavir. Its function is as follows. Multifunctional enzyme that converts the viral RNA genome into dsDNA in viral cytoplasmic capsids. This enzyme displays a DNA polymerase activity that can copy either DNA or RNA templates, and a ribonuclease H (RNase H) activity that cleaves the RNA strand of RNA-DNA heteroduplexes in a partially processive 3'- to 5'-endonucleasic mode. Neo-synthesized pregenomic RNA (pgRNA) are encapsidated together with the P protein, and reverse-transcribed inside the nucleocapsid. Initiation of reverse-transcription occurs first by binding the epsilon loop on the pgRNA genome, and is initiated by protein priming, thereby the 5'-end of (-)DNA is covalently linked to P protein. Partial (+)DNA is synthesized from the (-)DNA template and generates the relaxed circular DNA (RC-DNA) genome. After budding and infection, the RC-DNA migrates in the nucleus, and is converted into a plasmid-like covalently closed circular DNA (cccDNA). The activity of P protein does not seem to be necessary for cccDNA generation, and is presumably released from (+)DNA by host nuclear DNA repair machinery. In Hepatitis B virus genotype B2 subtype adw (isolate China/patient4/1996) (HBV-B), this protein is Protein P.